The chain runs to 222 residues: MIF4G domain-containing protein (222 aa).

The MIF4G domain occupies 3-205; sequence EASRDEYKIQ…LEIIEFRAAG (203 aa).

Belongs to the MIF4GD family. In terms of assembly, interacts with EIF4G1, EIF4G2 and SLBP; probably tethered by SLBP to the 3'-end of mRNAs ending with the histone stem-loop, it also interacts with EIF4G1 which is bound to their 5'-end.

The protein resides in the cytoplasm. Its subcellular location is the nucleus. Functionally, functions in replication-dependent translation of histone mRNAs which differ from other eukaryotic mRNAs in that they do not end with a poly-A tail but a stem-loop. May participate in circularizing those mRNAs specifically enhancing their translation. This chain is MIF4G domain-containing protein (Mif4gd), found in Rattus norvegicus (Rat).